The primary structure comprises 258 residues: Acetylglutamate kinase (258 aa).

Substrate is bound by residues Gly-41–Gly-42, Arg-63, and Asn-156.

It belongs to the acetylglutamate kinase family. ArgB subfamily.

The protein resides in the cytoplasm. It catalyses the reaction N-acetyl-L-glutamate + ATP = N-acetyl-L-glutamyl 5-phosphate + ADP. The protein operates within amino-acid biosynthesis; L-arginine biosynthesis; N(2)-acetyl-L-ornithine from L-glutamate: step 2/4. Its function is as follows. Catalyzes the ATP-dependent phosphorylation of N-acetyl-L-glutamate. This is Acetylglutamate kinase from Geobacillus kaustophilus (strain HTA426).